The primary structure comprises 343 residues: Ribosomal RNA small subunit methyltransferase C (343 aa).

Belongs to the methyltransferase superfamily. RsmC family. As to quaternary structure, monomer.

The protein localises to the cytoplasm. The enzyme catalyses guanosine(1207) in 16S rRNA + S-adenosyl-L-methionine = N(2)-methylguanosine(1207) in 16S rRNA + S-adenosyl-L-homocysteine + H(+). Specifically methylates the guanine in position 1207 of 16S rRNA in the 30S particle. The polypeptide is Ribosomal RNA small subunit methyltransferase C (Escherichia coli (strain SMS-3-5 / SECEC)).